Reading from the N-terminus, the 64-residue chain is Large ribosomal subunit protein uL29 (64 aa).

The protein belongs to the universal ribosomal protein uL29 family.

This Acaryochloris marina (strain MBIC 11017) protein is Large ribosomal subunit protein uL29.